A 161-amino-acid polypeptide reads, in one-letter code: V-type proton ATPase subunit c (161 aa).

Residues 1-9 (MSTDLCPVY) lie on the Lumenal side of the membrane. The chain crosses the membrane as a helical span at residues 10 to 32 (APFFGVMGCTAAIVFASFGAAYG). Topologically, residues 33–54 (TAKAGVGISAMGVLRPDLIVKN) are cytoplasmic. Residues 55-75 (TIPVVMAGIIAIYGLVVSVLI) traverse the membrane as a helical segment. Residues 76–91 (SGNLKQILSLYSGFIQ) lie on the Lumenal side of the membrane. A helical membrane pass occupies residues 92–113 (LGAGLSVGLAGLAAGFAIGIVG). Topologically, residues 114–125 (DAGVRGTAQQPR) are cytoplasmic. Residues 126–151 (LFVAMILILIFAEVLGLYGLIVALLL) form a helical membrane-spanning segment. Over 152 to 161 (NTRATDNVTC) the chain is Lumenal.

Belongs to the V-ATPase proteolipid subunit family. In terms of assembly, V-ATPase is a heteromultimeric enzyme composed of a peripheral catalytic V1 complex (components A to H) attached to an integral membrane V0 proton pore complex (components: a, c, c', c'', d, e, f and VOA1). The decameric c-ring forms the proton-conducting pore, and is composed of eight proteolipid subunits c, one subunit c' and one subunit c''.

It localises to the vacuole membrane. In terms of biological role, proton-conducting pore forming subunit of the V0 complex of vacuolar(H+)-ATPase (V-ATPase), a multisubunit enzyme composed of a peripheral complex (V1) that hydrolyzes ATP and a membrane integral complex (V0) that translocates protons. V-ATPase is responsible for acidifying and maintaining the pH of intracellular compartments. In Schizosaccharomyces pombe (strain 972 / ATCC 24843) (Fission yeast), this protein is V-type proton ATPase subunit c.